A 62-amino-acid chain; its full sequence is Large ribosomal subunit protein bL35 (62 aa).

The tract at residues 31–62 (HLAQNKTTKQKRQSRKSAQMHSSDLKRFKALI) is disordered. Residues 53–62 (SDLKRFKALI) are compositionally biased toward basic and acidic residues.

This sequence belongs to the bacterial ribosomal protein bL35 family.

This is Large ribosomal subunit protein bL35 from Mycoplasmopsis agalactiae (strain NCTC 10123 / CIP 59.7 / PG2) (Mycoplasma agalactiae).